A 384-amino-acid chain; its full sequence is 23S rRNA (uracil(747)-C(5))-methyltransferase RlmC (384 aa).

[4Fe-4S] cluster is bound by residues Cys7, Cys15, Cys18, and Cys94. 4 residues coordinate S-adenosyl-L-methionine: Gln219, Phe248, Glu269, and Asn316. The active-site Nucleophile is the Cys343.

The protein belongs to the class I-like SAM-binding methyltransferase superfamily. RNA M5U methyltransferase family. RlmC subfamily.

The catalysed reaction is uridine(747) in 23S rRNA + S-adenosyl-L-methionine = 5-methyluridine(747) in 23S rRNA + S-adenosyl-L-homocysteine + H(+). Its function is as follows. Catalyzes the formation of 5-methyl-uridine at position 747 (m5U747) in 23S rRNA. This chain is 23S rRNA (uracil(747)-C(5))-methyltransferase RlmC, found in Shewanella sp. (strain MR-7).